Consider the following 436-residue polypeptide: Trigger factor (436 aa).

The region spanning 161 to 246 (GDQVNIDFVG…VNSVAAPQLP (86 aa)) is the PPIase FKBP-type domain.

Belongs to the FKBP-type PPIase family. Tig subfamily.

The protein localises to the cytoplasm. The enzyme catalyses [protein]-peptidylproline (omega=180) = [protein]-peptidylproline (omega=0). Involved in protein export. Acts as a chaperone by maintaining the newly synthesized protein in an open conformation. Functions as a peptidyl-prolyl cis-trans isomerase. The polypeptide is Trigger factor (Stutzerimonas stutzeri (strain A1501) (Pseudomonas stutzeri)).